Here is a 201-residue protein sequence, read N- to C-terminus: ATP-dependent Clp protease proteolytic subunit (201 aa).

Serine 105 (nucleophile) is an active-site residue. Histidine 130 is an active-site residue.

This sequence belongs to the peptidase S14 family. As to quaternary structure, fourteen ClpP subunits assemble into 2 heptameric rings which stack back to back to give a disk-like structure with a central cavity, resembling the structure of eukaryotic proteasomes.

The protein resides in the cytoplasm. It catalyses the reaction Hydrolysis of proteins to small peptides in the presence of ATP and magnesium. alpha-casein is the usual test substrate. In the absence of ATP, only oligopeptides shorter than five residues are hydrolyzed (such as succinyl-Leu-Tyr-|-NHMec, and Leu-Tyr-Leu-|-Tyr-Trp, in which cleavage of the -Tyr-|-Leu- and -Tyr-|-Trp bonds also occurs).. Its function is as follows. Cleaves peptides in various proteins in a process that requires ATP hydrolysis. Has a chymotrypsin-like activity. Plays a major role in the degradation of misfolded proteins. The chain is ATP-dependent Clp protease proteolytic subunit from Acinetobacter baylyi (strain ATCC 33305 / BD413 / ADP1).